The chain runs to 168 residues: MLWRGVMLYYLLAFVVILIDQWTKWLVVRYMELGESIPIIENVLYMTSHRNRGAAWGMLQGQFWLFYLITIVVVVGIVIYIQRLQPTQRLFGIALGLMLGGALGNFIDRIFRKEVVDFVHTYIFNYSFPIFNVADAALTIGVALMFIYTWTEEKQRKGMSDGANSTHD.

Helical transmembrane passes span 8–28 (LYYL…WLVV), 61–81 (GQFW…VIYI), and 91–111 (FGIA…DRIF). Active-site residues include D117 and D135. A helical transmembrane segment spans residues 128-148 (FPIFNVADAALTIGVALMFIY).

Belongs to the peptidase A8 family.

The protein localises to the cell membrane. It catalyses the reaction Release of signal peptides from bacterial membrane prolipoproteins. Hydrolyzes -Xaa-Yaa-Zaa-|-(S,diacylglyceryl)Cys-, in which Xaa is hydrophobic (preferably Leu), and Yaa (Ala or Ser) and Zaa (Gly or Ala) have small, neutral side chains.. The protein operates within protein modification; lipoprotein biosynthesis (signal peptide cleavage). Functionally, this protein specifically catalyzes the removal of signal peptides from prolipoproteins. The protein is Lipoprotein signal peptidase of Anoxybacillus flavithermus (strain DSM 21510 / WK1).